The chain runs to 941 residues: PHD finger protein 14 (941 aa).

Residues 22–295 form a disordered region; the sequence is DYDSSDDSDF…LSQSKSNEDS (274 aa). Ser-26 and Ser-29 each carry phosphoserine. A compositionally biased stretch (low complexity) spans 36–47; the sequence is ASDSEGSGNGSE. The span at 60–72 shows a compositional bias: acidic residues; it reads DSEENILEEELNE. Composition is skewed to basic and acidic residues over residues 74–85, 94–109, and 116–132; these read IQVKEEQLKNST, QLIK…NGER, and KEKE…EKAT. Ser-84 is modified (phosphoserine). Residues 133 to 166 show a composition bias toward low complexity; sequence VSDSAAASAAGTTPATSPPAVTSPSVPTTTTTTT. Ser-189 carries the phosphoserine modification. Acidic residues-rich tracts occupy residues 194–205 and 226–249; these read NAMDDYDSEDDN and DGDN…EGND. Tyr-199 carries the post-translational modification Phosphotyrosine. At Ser-201 the chain carries Phosphoserine. The residue at position 280 (Thr-280) is a Phosphothreonine. The span at 281–290 shows a compositional bias: polar residues; that stretch reads NDSLTLSQSK. 5 positions are modified to phosphoserine: Ser-283, Ser-287, Ser-291, Ser-295, and Ser-301. A PHD-type 1 zinc finger spans residues 312–373; that stretch reads ILICCVCLGD…PWFCDACKCG (62 aa). Cys-315, Cys-318, Cys-332, Cys-335, His-340, and Cys-343 together coordinate Zn(2+). Ser-352 is subject to Phosphoserine. Residues Cys-367, Cys-370, Cys-378, Cys-381, His-398, Cys-401, Cys-434, Cys-437, Cys-451, Cys-456, His-461, Cys-464, Cys-488, and His-491 each contribute to the Zn(2+) site. The C2HC pre-PHD-type zinc finger occupies 375–408; the sequence is SPSCELCPNQDGIFKETDAGRWVHIVCALYVPGV. Residues 432–492 form a PHD-type 2 zinc finger; it reads KECSFCEDPR…PFFAYCKQHA (61 aa). At Ser-523 the chain carries Phosphoserine. Residues 623–671 adopt a coiled-coil conformation; the sequence is MIQIQENMAEQKNIKDKLENEQEKLHVEYNKLCESLEELQNLNGKLRSE. Residues 718-772 form a PHD-type 3 zinc finger; it reads LYSCGICKKNHDQHLLLLCDTCKLHYHLGCLDPPLTRMPRKTKNSYWQCSECDQA. Positions 721, 724, 736, 739, 744, 747, 766, and 769 each coordinate Zn(2+). Residues Ser-774, Ser-775, and Ser-828 each carry the phosphoserine modification. Residues 804-855 form a disordered region; sequence VPQDVPPEPKKIPIRNTRTRGRKRSFVPEEEKHEERVPRERRQRQSVLQKKP. Residues 829-843 are compositionally biased toward basic and acidic residues; it reads FVPEEEKHEERVPRE. Residues 861–914 form a PHD-type 4 zinc finger; that stretch reads RTECSTCKGTGDNENLVRCDECRLCYHFGCLDPPLKKSPKQTGYGWICQECDSS. Zn(2+) contacts are provided by Cys-864, Cys-867, Cys-879, Cys-882, His-887, Cys-890, Cys-908, and Cys-911. Positions 912-941 are disordered; the sequence is DSSSSKEDENEAEKKNASQELSMEQKTPKK. Residues 915 to 928 are compositionally biased toward basic and acidic residues; it reads SSKEDENEAEKKNA. The span at 930-941 shows a compositional bias: polar residues; sequence QELSMEQKTPKK.

High levels detected in testis, lung and spleen and low levels in muscle, heart, intestine and kidney (at protein level). Widely expressed in adult with increased levels in intestine, colon and lung.

It is found in the nucleus. The protein resides in the chromosome. It localises to the cytoplasm. In terms of biological role, histone-binding protein. Binds preferentially to unmodified histone H3 but can also bind to a lesser extent to histone H3 trimethylated at 'Lys-9' (H3K9me3) as well as to histone H3 monomethylated at 'Lys-27' (H3K27ac) and trimethylated at 'Lys-27' (H3K27me3). Represses PDGFRA expression, thus playing a role in regulation of mesenchymal cell proliferation. Suppresses the expression of CDKN1A/p21 by reducing the level of trimethylation of histone H3 'Lys-4', leading to enhanced proliferation of germinal center B cells. The sequence is that of PHD finger protein 14 (Phf14) from Mus musculus (Mouse).